We begin with the raw amino-acid sequence, 374 residues long: Trichodiene synthase (374 aa).

Mg(2+) is bound by residues Asp-100, Glu-164, Asn-225, Ser-229, Glu-233, Asp-239, and Ile-241. Positions 100–104 (DDSKD) are aspartate-rich domain.

It belongs to the trichodiene synthase family. It depends on Mg(2+) as a cofactor. Mn(2+) serves as cofactor.

The catalysed reaction is (2E,6E)-farnesyl diphosphate = trichodiene + diphosphate. It participates in sesquiterpene biosynthesis; trichothecene biosynthesis. Its activity is regulated as follows. Benzyl triethylammonium cation (BTAC) acts as a competitive inhibitor of trichodiene synthase reaction in the presence of pyrophosphate (PPi). Trichodiene synthase; part of the core gene cluster that mediates the biosynthesis of trichothecenes, a very large family of chemically related bicyclic sesquiterpene compounds acting as mycotoxins, including T2-toxin. The biosynthesis of trichothecenes begins with the cyclization of farnesyl diphosphate to trichodiene and is catalyzed by the trichodiene synthase TRI5. Trichodiene undergoes a series of oxygenations catalyzed by the cytochrome P450 monooxygenase TRI4. TRI4 controls the addition of four oxygens at C-2, C-3, C-11, and the C-12, C-13-epoxide to form the intermediate isotrichotriol. Isotrichotriol then undergoes a non-enzymatic isomerization and cyclization to form isotrichodermol. During this process, the oxygen at the C-2 position becomes the pyran ring oxygen and the hydroxyl group at C-11 is lost. More complex type A trichothecenes are built by modifying isotrichodermol through a series of paired hydroxylation and acetylation or acylation steps. Isotrichodermol is converted to isotrichodermin by the acetyltransferase TRI101. TRI101 encodes a C-3 transacetylase that acts as a self-protection or resistance factor during biosynthesis and that the presence of a free C-3 hydroxyl group is a key component of Fusarium trichothecene phytotoxicity. A second hydroxyl group is added to C-15 by the trichothecene C-15 hydroxylase TRI11, producing 15-decalonectrin, which is then acetylated by TRI3, producing calonectrin. A third hydroxyl group is added at C-4 by the cytochrome P450 monooxygenase TRI13, converting calonectrin to 3,15-diacetoxyspirpenol, which is subsequently acetylated by the acetyltransferase TRI7. A fourth hydroxyl group is added to C-8 by the cytochrome P450 monooxygenase TRI1, followed by the addition of an isovaleryl moiety by TRI16. Finally, the acetyl group is removed from the C-3 position by the trichothecene C-3 esterase TRI8 to produce T-2 toxin. The chain is Trichodiene synthase from Fusarium sporotrichioides.